A 700-amino-acid polypeptide reads, in one-letter code: Tectonic-2 (700 aa).

An N-terminal signal peptide occupies residues 1–25; the sequence is MGSLSPLSLLWGLLLLQGVLRPLRG. The Extracellular portion of the chain corresponds to 26–665; it reads DPVFIPPFIR…YYQGEPQSQC (640 aa). N-linked (GlcNAc...) asparagine glycosylation is found at Asn-76, Asn-82, Asn-146, Asn-156, and Asn-389. Residues 666-682 traverse the membrane as a helical segment; sequence VAKGLMLLSLLMLAILL. Topologically, residues 683 to 700 are cytoplasmic; sequence RHPWVRMCKARDSAAIYH.

The protein belongs to the tectonic family. In terms of assembly, part of the tectonic-like complex (also named B9 complex). In terms of tissue distribution, significant expression is observed in brain, kidney and eye.

It localises to the membrane. Its subcellular location is the cytoplasm. The protein resides in the cytoskeleton. The protein localises to the cilium basal body. In terms of biological role, component of the tectonic-like complex, a complex localized at the transition zone of primary cilia and acting as a barrier that prevents diffusion of transmembrane proteins between the cilia and plasma membranes. Required for hedgehog signaling transduction. This is Tectonic-2 (Tctn2) from Mus musculus (Mouse).